The sequence spans 497 residues: Guanosine-5'-triphosphate,3'-diphosphate pyrophosphatase (497 aa).

Belongs to the GppA/Ppx family. GppA subfamily.

The catalysed reaction is guanosine 3'-diphosphate 5'-triphosphate + H2O = guanosine 3',5'-bis(diphosphate) + phosphate + H(+). The protein operates within purine metabolism; ppGpp biosynthesis; ppGpp from GTP: step 2/2. Its function is as follows. Catalyzes the conversion of pppGpp to ppGpp. Guanosine pentaphosphate (pppGpp) is a cytoplasmic signaling molecule which together with ppGpp controls the 'stringent response', an adaptive process that allows bacteria to respond to amino acid starvation, resulting in the coordinated regulation of numerous cellular activities. The sequence is that of Guanosine-5'-triphosphate,3'-diphosphate pyrophosphatase from Vibrio atlanticus (strain LGP32) (Vibrio splendidus (strain Mel32)).